The chain runs to 242 residues: Linker for activation of T-cells family member 1 (242 aa).

The Extracellular segment spans residues 1–4; that stretch reads MEAD. Residues 5 to 28 form a helical; Signal-anchor for type III membrane protein membrane-spanning segment; that stretch reads ALSPVGLGLLLLPFLVTLLAALCV. S-palmitoyl cysteine attachment occurs at residues Cys-27 and Cys-30. Topologically, residues 29-242 are cytoplasmic; the sequence is RCRELPVSYD…PDYENLQELN (214 aa). Thr-40 is subject to Phosphothreonine. Ser-41, Ser-44, Ser-87, Ser-104, Ser-109, and Ser-112 each carry phosphoserine. Residues 78-118 form a disordered region; it reads QPDLLPIPRSPQPLGGSHRMPSSQQNSDDANSVASYENQEP. Residues 97–115 are compositionally biased toward polar residues; the sequence is MPSSQQNSDDANSVASYEN. The interaction with PLCG1 stretch occupies residues 136-139; the sequence is YLVV. Tyr-175 carries the phosphotyrosine modification. Interaction with GRB2, GRAP2 and PIK3R1 regions lie at residues 175–178 and 195–198; these read YVNV. Positions 176–242 are disordered; sequence VNVPESEESA…PDYENLQELN (67 aa). Ser-199, Ser-212, and Ser-215 each carry phosphoserine. The span at 217–234 shows a compositional bias: acidic residues; that stretch reads EVEDEGEEEGVDGEEAPD. Phosphotyrosine is present on Tyr-235.

As to quaternary structure, when phosphorylated, interacts directly with the PIK3R1 subunit of phosphoinositide 3-kinase and the SH2 domains of GRB2, GRAP, GRAP2, PLCG1 and PLCG2. Interacts indirectly with CBL, SOS, VAV, and LCP2. Interacts with SHB and SKAP2. Interacts with FCGR1A. Interacts with CLNK. Interacts with GRB2, PLCG1 and THEMIS upon TCR activation in thymocytes. Interacts with THEMIS2. In terms of processing, phosphorylated on tyrosines by ZAP70 upon TCR activation, or by SYK upon other immunoreceptor activation; which leads to the recruitment of multiple signaling molecules. Is one of the most prominently tyrosine-phosphorylated proteins detected following TCR engagement. May be dephosphorylated by PTPRJ. Phosphorylated by ITK leading to the recruitment of VAV1 to LAT-containing complexes. Post-translationally, palmitoylation of Cys-27 and Cys-30 is required for raft targeting and efficient phosphorylation. Phosphorylated on tyrosines by ZAP70 upon TCR activation, or by SYK upon other immunoreceptor activation; which leads to the recruitment of multiple signaling molecules. Is one of the most prominently tyrosine-phosphorylated proteins detected following TCR engagement. May be dephosphorylated by PTPRJ. Phosphorylated by ITK leading to the recruitment of VAV1 to LAT-containing complexes. In terms of processing, 'Lys-63'-linked ubiquitinated by TRAF6. Expressed in T-cells and mast cells.

Its subcellular location is the cell membrane. Required for TCR (T-cell antigen receptor)- and pre-TCR-mediated signaling, both in mature T-cells and during their development. Involved in FCGR3 (low affinity immunoglobulin gamma Fc region receptor III)-mediated signaling in natural killer cells and FCER1 (high affinity immunoglobulin epsilon receptor)-mediated signaling in mast cells. Couples activation of these receptors and their associated kinases with distal intracellular events such as mobilization of intracellular calcium stores, PKC activation, MAPK activation or cytoskeletal reorganization through the recruitment of PLCG1, GRB2, GRAP2, and other signaling molecules. In Mus musculus (Mouse), this protein is Linker for activation of T-cells family member 1 (Lat).